The chain runs to 97 residues: Co-chaperonin GroES (97 aa).

It belongs to the GroES chaperonin family. As to quaternary structure, heptamer of 7 subunits arranged in a ring. Interacts with the chaperonin GroEL.

The protein localises to the cytoplasm. Together with the chaperonin GroEL, plays an essential role in assisting protein folding. The GroEL-GroES system forms a nano-cage that allows encapsulation of the non-native substrate proteins and provides a physical environment optimized to promote and accelerate protein folding. GroES binds to the apical surface of the GroEL ring, thereby capping the opening of the GroEL channel. The protein is Co-chaperonin GroES of Pectobacterium atrosepticum (strain SCRI 1043 / ATCC BAA-672) (Erwinia carotovora subsp. atroseptica).